The following is a 251-amino-acid chain: MINFSNTLVILNNDVPCELLKKKYSELLIPTISILDFKKKKIYKKYNNIFLYSYQNYSFLLDLNDNILLKIQKYLNKNGILDINLYLNDKNNNNNSGTNKKDHSKIEDISQILKKLRKECLYNGYINISTEQTTSENGIVINIKAENPDFNKSDDDNNLVSSDEEIYEKCEDKKKVVNRVCDNCTCGKKEKAMNLEKIKINDNEVEYSTENVVSSCGNCYLGDAFRCGSCPYKGLPAFQPGENVKLNLNVC.

An N-terminal SAM-like domain region spans residues 1–154 (MINFSNTLVI…AENPDFNKSD (154 aa)). Residues 155-167 (DDNNLVSSDEEIY) are linker. Cys170, Cys181, Cys184, and Cys186 together coordinate [2Fe-2S] cluster. Positions 170-186 (CEDKKKVVNRVCDNCTC) are fe-S binding site A. Residues Cys216, Cys219, Cys227, and Cys230 each contribute to the [4Fe-4S] cluster site. 2 consecutive short sequence motifs (cx2C motif) follow at residues 216-219 (CGNC) and 227-230 (CGSC). Residues 216 to 230 (CGNCYLGDAFRCGSC) form a fe-S binding site B region.

Belongs to the anamorsin family. In terms of assembly, monomer. Requires [2Fe-2S] cluster as cofactor. [4Fe-4S] cluster serves as cofactor.

Its subcellular location is the cytoplasm. It is found in the mitochondrion intermembrane space. Component of the cytosolic iron-sulfur (Fe-S) protein assembly (CIA) machinery. Required for the maturation of extramitochondrial Fe-S proteins. Part of an electron transfer chain functioning in an early step of cytosolic Fe-S biogenesis, facilitating the de novo assembly of a [4Fe-4S] cluster on the cytosolic Fe-S scaffold complex. Electrons are transferred from NADPH via a FAD- and FMN-containing diflavin oxidoreductase. Together with the diflavin oxidoreductase, also required for the assembly of the diferric tyrosyl radical cofactor of ribonucleotide reductase (RNR), probably by providing electrons for reduction during radical cofactor maturation in the catalytic small subunit. The polypeptide is Anamorsin homolog (Plasmodium yoelii yoelii).